A 308-amino-acid polypeptide reads, in one-letter code: Inactive C-alpha-formylglycine-generating enzyme 2 (308 aa).

A signal peptide spans methionine 1–alanine 33. Cysteine 163 and cysteine 297 are joined by a disulfide. Asparagine 198 carries N-linked (GlcNAc...) asparagine glycosylation. 8 residues coordinate Ca(2+): asparagine 201, leucine 202, aspartate 215, phenylalanine 217, aspartate 236, glycine 239, valine 241, and glutamate 243. The segment covering arginine 281 to aspartate 291 has biased composition (polar residues). The disordered stretch occupies residues arginine 281–leucine 308. The Non-canonical ER retention motif signature appears at lysine 305 to leucine 308.

It belongs to the sulfatase-modifying factor family. In terms of assembly, homodimer and heterodimer with SUMF1.

Its subcellular location is the endoplasmic reticulum lumen. Functionally, lacks formylglycine generating activity and is unable to convert newly synthesized inactive sulfatases to their active form. Inhibits the activation of sulfatases by SUMF1. The protein is Inactive C-alpha-formylglycine-generating enzyme 2 of Mus musculus (Mouse).